The sequence spans 211 residues: Holliday junction branch migration complex subunit RuvA (211 aa).

A domain I region spans residues Met-1 to Gly-70. Residues Arg-71 to Gly-149 are domain II. The flexible linker stretch occupies residues Glu-150 to Thr-158. Residues Thr-158–His-211 form a domain III region.

It belongs to the RuvA family. Homotetramer. Forms an RuvA(8)-RuvB(12)-Holliday junction (HJ) complex. HJ DNA is sandwiched between 2 RuvA tetramers; dsDNA enters through RuvA and exits via RuvB. An RuvB hexamer assembles on each DNA strand where it exits the tetramer. Each RuvB hexamer is contacted by two RuvA subunits (via domain III) on 2 adjacent RuvB subunits; this complex drives branch migration. In the full resolvosome a probable DNA-RuvA(4)-RuvB(12)-RuvC(2) complex forms which resolves the HJ.

It is found in the cytoplasm. Functionally, the RuvA-RuvB-RuvC complex processes Holliday junction (HJ) DNA during genetic recombination and DNA repair, while the RuvA-RuvB complex plays an important role in the rescue of blocked DNA replication forks via replication fork reversal (RFR). RuvA specifically binds to HJ cruciform DNA, conferring on it an open structure. The RuvB hexamer acts as an ATP-dependent pump, pulling dsDNA into and through the RuvAB complex. HJ branch migration allows RuvC to scan DNA until it finds its consensus sequence, where it cleaves and resolves the cruciform DNA. The chain is Holliday junction branch migration complex subunit RuvA from Synechocystis sp. (strain ATCC 27184 / PCC 6803 / Kazusa).